Consider the following 145-residue polypeptide: Large ribosomal subunit protein uL13 (145 aa).

Belongs to the universal ribosomal protein uL13 family. Part of the 50S ribosomal subunit.

In terms of biological role, this protein is one of the early assembly proteins of the 50S ribosomal subunit, although it is not seen to bind rRNA by itself. It is important during the early stages of 50S assembly. The protein is Large ribosomal subunit protein uL13 of Listeria monocytogenes serotype 4b (strain CLIP80459).